The chain runs to 157 residues: DNA-binding protein MNB1B (157 aa).

3 disordered regions span residues Met-1–Pro-45, Phe-59–Asp-87, and Tyr-109–Glu-157. Composition is skewed to basic and acidic residues over residues Ala-10 to Ala-27 and Ala-76 to Asp-87. Residues Pro-41 to Asn-110 constitute a DNA-binding region (HMG box). Composition is skewed to acidic residues over residues Glu-124 to Ser-133 and Asn-141 to Glu-157. Position 149 is a phosphoserine; by CK2 (Ser-149).

In terms of tissue distribution, expressed in all tissues examined.

It is found in the nucleus. Recognizes an AAGG motif at the MNF1-binding site. The chain is DNA-binding protein MNB1B (MNB1B) from Zea mays (Maize).